Reading from the N-terminus, the 567-residue chain is Serine/threonine-protein kinase SSN3 (567 aa).

Positions 68-470 (YEIIGYIAAG…AINALDHSYF (403 aa)) constitute a Protein kinase domain. An ATP-binding site is contributed by 74–82 (IAAGTYGKV). Residues 88–179 (RQSSKSSSST…RNSENTDNRR (92 aa)) form a disordered region. Positions 90 to 101 (SSKSSSSTGSDS) are enriched in low complexity. Polar residues-rich tracts occupy residues 102–122 (LAQD…QNAG) and 133–150 (PNSN…ELST). Residues 167-179 (GDKRNSENTDNRR) show a composition bias toward basic and acidic residues. Lysine 190 contacts ATP. Residue aspartate 293 is the Proton acceptor of the active site. Residues 546-556 (AVSGNSSSQSS) are compositionally biased toward low complexity. Residues 546–567 (AVSGNSSSQSSRNMEPMKKKRK) form a disordered region.

Belongs to the protein kinase superfamily. CMGC Ser/Thr protein kinase family. CDC2/CDKX subfamily. In terms of assembly, component of the SRB8-11 complex, a regulatory module of the Mediator complex. Mg(2+) serves as cofactor.

It is found in the nucleus. The enzyme catalyses L-seryl-[protein] + ATP = O-phospho-L-seryl-[protein] + ADP + H(+). It catalyses the reaction L-threonyl-[protein] + ATP = O-phospho-L-threonyl-[protein] + ADP + H(+). The catalysed reaction is [DNA-directed RNA polymerase] + ATP = phospho-[DNA-directed RNA polymerase] + ADP + H(+). Functionally, component of the SRB8-11 complex. The SRB8-11 complex is a regulatory module of the Mediator complex which is itself involved in regulation of basal and activated RNA polymerase II-dependent transcription. The SRB8-11 complex may be involved in the transcriptional repression of a subset of genes regulated by Mediator. It may inhibit the association of the Mediator complex with RNA polymerase II to form the holoenzyme complex. The SRB8-11 complex phosphorylates the C-terminal domain (CTD) of the largest subunit of RNA polymerase II. This is Serine/threonine-protein kinase SSN3 (SSN3) from Candida glabrata (strain ATCC 2001 / BCRC 20586 / JCM 3761 / NBRC 0622 / NRRL Y-65 / CBS 138) (Yeast).